The chain runs to 122 residues: Large ribosomal subunit protein bL12 (122 aa).

The protein belongs to the bacterial ribosomal protein bL12 family. In terms of assembly, homodimer. Part of the ribosomal stalk of the 50S ribosomal subunit. Forms a multimeric L10(L12)X complex, where L10 forms an elongated spine to which 2 to 4 L12 dimers bind in a sequential fashion. Binds GTP-bound translation factors.

In terms of biological role, forms part of the ribosomal stalk which helps the ribosome interact with GTP-bound translation factors. Is thus essential for accurate translation. The polypeptide is Large ribosomal subunit protein bL12 (Stenotrophomonas maltophilia (strain R551-3)).